Reading from the N-terminus, the 155-residue chain is uncharacterized protein (155 aa).

Residues 1–23 (MRLMRNLMNALLLGAAASSLAVA) form the signal peptide. Cys-86 and Cys-91 are disulfide-bonded.

This sequence belongs to the ivy family.

It localises to the periplasm. This is an uncharacterized protein from Pseudomonas aeruginosa (strain ATCC 15692 / DSM 22644 / CIP 104116 / JCM 14847 / LMG 12228 / 1C / PRS 101 / PAO1).